A 599-amino-acid polypeptide reads, in one-letter code: Elongation factor 4 (599 aa).

A tr-type G domain is found at 2–184 (KHIRNFSIIA…RLVRDIPPPQ (183 aa)). Residues 14–19 (DHGKST) and 131–134 (NKID) contribute to the GTP site.

Belongs to the TRAFAC class translation factor GTPase superfamily. Classic translation factor GTPase family. LepA subfamily.

Its subcellular location is the cell inner membrane. The enzyme catalyses GTP + H2O = GDP + phosphate + H(+). Required for accurate and efficient protein synthesis under certain stress conditions. May act as a fidelity factor of the translation reaction, by catalyzing a one-codon backward translocation of tRNAs on improperly translocated ribosomes. Back-translocation proceeds from a post-translocation (POST) complex to a pre-translocation (PRE) complex, thus giving elongation factor G a second chance to translocate the tRNAs correctly. Binds to ribosomes in a GTP-dependent manner. This chain is Elongation factor 4, found in Yersinia enterocolitica serotype O:8 / biotype 1B (strain NCTC 13174 / 8081).